A 534-amino-acid polypeptide reads, in one-letter code: Zinc finger protein 397 (534 aa).

At serine 31 the chain carries Phosphoserine. The region spanning 50 to 132 (RQQFRKFCYQ…TLLEDLEREF (83 aa)) is the SCAN box domain. Residues lysine 55, lysine 171, lysine 202, and lysine 252 each participate in a glycyl lysine isopeptide (Lys-Gly) (interchain with G-Cter in SUMO2) cross-link. A disordered region spans residues 197 to 242 (DISGEKSQRLSQEPSFGGFSEHKSSLEWQQGSAPGETLRRSPSQRA). 9 consecutive C2H2-type zinc fingers follow at residues 285–307 (YRCD…QRIH), 313–335 (YKCN…QRIH), 341–363 (YECS…RKIH), 369–391 (CKCN…QRIH), 397–419 (YECN…QRIH), 425–447 (YECN…QRIH), 453–475 (YECN…QRIH), 481–503 (YQCN…QRIH), and 509–531 (YICS…QRVH).

It belongs to the krueppel C2H2-type zinc-finger protein family.

The protein localises to the nucleus. DNA-dependent transcriptional repressor. This is Zinc finger protein 397 (ZNF397) from Bos taurus (Bovine).